Reading from the N-terminus, the 134-residue chain is Ribonuclease VapC2 (134 aa).

One can recognise a PINc domain in the interval 3–124; sequence YMLDTNICVY…TNNIKEFKRI (122 aa). Asp6 is a binding site for Mg(2+).

The protein belongs to the PINc/VapC protein family. As to quaternary structure, forms complexes with VapB2; probably VapC2(4):VapB2(2) in the absence of DNA, and VapC2(4):VapB2(4) in the presence of DNA. Crystallizes as heterodimers with stoichiometry VapC2(4):VapB2(4) in the presence of its probable promoter DNA. The heterodimers are in contact via alternative VapC-VapC and VapB-VapB interactions. This subunit does not contact DNA. Mg(2+) is required as a cofactor.

Its function is as follows. Toxic component of a type II toxin-antitoxin (TA) system. Has ssRNase activity. Upon expression in E.coli or S.cerevisiae inhibits growth in liquid culture; in S.cerevisiae its expression leads to apoptosis-like characteristics. Rapidly induces apoptosis (within 2 hours) upon microinjection into mouse fibroblasts (L929 line); pretreatment of cells with dexamethasone protects them. Probably contributes to host cell death if bacterial cell lysis occurs during host infection. Its toxic effect is neutralized by coexpression with cognate antitoxin VapB2, its RNase activity is partially inhibited in vitro by VapB2. This is Ribonuclease VapC2 from Rickettsia felis (strain ATCC VR-1525 / URRWXCal2) (Rickettsia azadi).